We begin with the raw amino-acid sequence, 195 residues long: Imidazoleglycerol-phosphate dehydratase (195 aa).

Belongs to the imidazoleglycerol-phosphate dehydratase family.

It is found in the cytoplasm. The catalysed reaction is D-erythro-1-(imidazol-4-yl)glycerol 3-phosphate = 3-(imidazol-4-yl)-2-oxopropyl phosphate + H2O. It participates in amino-acid biosynthesis; L-histidine biosynthesis; L-histidine from 5-phospho-alpha-D-ribose 1-diphosphate: step 6/9. This is Imidazoleglycerol-phosphate dehydratase from Cereibacter sphaeroides (strain ATCC 17025 / ATH 2.4.3) (Rhodobacter sphaeroides).